The primary structure comprises 240 residues: Peptidyl-tRNA hydrolase 2 (240 aa).

Tyr-60 is a binding site for tRNA. Catalysis depends on His-65, which acts as the Proton acceptor. The tRNA site is built by Tyr-111, Asn-113, and Asn-159.

The protein belongs to the PTH family. Monomer.

Its subcellular location is the cytoplasm. The catalysed reaction is an N-acyl-L-alpha-aminoacyl-tRNA + H2O = an N-acyl-L-amino acid + a tRNA + H(+). Its function is as follows. Hydrolyzes ribosome-free peptidyl-tRNAs (with 1 or more amino acids incorporated), which drop off the ribosome during protein synthesis, or as a result of ribosome stalling. Catalyzes the release of premature peptidyl moieties from peptidyl-tRNA molecules trapped in stalled 50S ribosomal subunits, and thus maintains levels of free tRNAs and 50S ribosomes. The chain is Peptidyl-tRNA hydrolase 2 from Corynebacterium jeikeium (strain K411).